Consider the following 1454-residue polypeptide: E3 ubiquitin-protein ligase substrate receptor MMS22 (1454 aa).

A disordered region spans residues 159–178 (NSSVQSQRYDSDEEIPKKRH). A required for interaction with MMS1 region spans residues 1201–1454 (YDEGDISRNF…SEPFKTFKNT (254 aa)).

It belongs to the MMS22 family. As to quaternary structure, component of a cullin-RING ligase (CRL) composed of 4 subunits: the RING protein HRT1, the cullin RTT101, a linker protein MMS1, and the substrate receptor MMS22. This complex further interacts with RTT107 and CTF4 to form RTT101-MMS1-MMS22-RTT107 and RTT101-MMS1-MMS22-CTF4 complexes respectively. Interacts (via C-ter) with MMS1 (via N-ter). Interacts with RTT107.

The protein resides in the nucleus. Substrate targeting component of a cullin-RING-based E3 ubiquitin-protein ligase complex RTT101(MMS1-MMS22). RTT101(MMS1-MMS22) promotes fork progression through damaged DNA or natural pause sites by stabilizing replication proteins like the replication fork-pausing complex (FPC) and leading-strand polymerase at stalled replication forks. RTT101(MMS1-MMS22) ubiquitinates the acetylated histones H3K56ac-H4 at lysine residues H3K121, H3K122 and H3K125. Ubiquitination is required for efficient histone deposition during replication-coupled nucleosome assembly, probably by facilitating the transfer of H3-H4 from ASF1 to other chaperones involved in histone deposition. This is E3 ubiquitin-protein ligase substrate receptor MMS22 (MMS22) from Saccharomyces cerevisiae (strain ATCC 204508 / S288c) (Baker's yeast).